The chain runs to 450 residues: Molybdate-anion transporter (450 aa).

12 helical membrane-spanning segments follow: residues 1–21 (MLVTAYLSFVGLLASCLGLEL), 38–58 (FLQFQLDFYQVYFLALAADWL), 79–99 (ILYVCGLASTVLFGLVASSLV), 128–148 (FVLLVGRALGGLSTALLFSAF), 167–187 (IPATFARAAFWNHVLAVAAGV), 191–211 (AVASWIGLGPVAPFVAAIPLL), 249–269 (VLLLGVIQALFESVIFIFVFL), 278–298 (GAPLGIVFSSFMAASLLGSSL), 311–331 (PMHLLSLAVLIVVFSLFMLTF), 344–364 (FIAFLLIELACGLYFPSMSFL), 376–396 (GVLNWFRVPLHLLACLGLLVL), and 409–429 (FSICSAVMVTTLLAVAGLFTV).

It belongs to the major facilitator superfamily.

It is found in the cell membrane. Functionally, mediates high-affinity intracellular uptake of the rare oligo-element molybdenum. This Mus musculus (Mouse) protein is Molybdate-anion transporter (Mfsd5).